The primary structure comprises 413 residues: Serine hydroxymethyltransferase (413 aa).

(6S)-5,6,7,8-tetrahydrofolate-binding positions include leucine 117 and 121 to 123 (GHL). Lysine 226 carries the N6-(pyridoxal phosphate)lysine modification. (6S)-5,6,7,8-tetrahydrofolate is bound by residues glutamate 239 and 349-351 (SPF).

Belongs to the SHMT family. Homodimer. The cofactor is pyridoxal 5'-phosphate.

It localises to the cytoplasm. The catalysed reaction is (6R)-5,10-methylene-5,6,7,8-tetrahydrofolate + glycine + H2O = (6S)-5,6,7,8-tetrahydrofolate + L-serine. The protein operates within one-carbon metabolism; tetrahydrofolate interconversion. It participates in amino-acid biosynthesis; glycine biosynthesis; glycine from L-serine: step 1/1. Catalyzes the reversible interconversion of serine and glycine with tetrahydrofolate (THF) serving as the one-carbon carrier. This reaction serves as the major source of one-carbon groups required for the biosynthesis of purines, thymidylate, methionine, and other important biomolecules. Also exhibits THF-independent aldolase activity toward beta-hydroxyamino acids, producing glycine and aldehydes, via a retro-aldol mechanism. This chain is Serine hydroxymethyltransferase, found in Bacillus mycoides (strain KBAB4) (Bacillus weihenstephanensis).